The sequence spans 538 residues: Phosphoenolpyruvate carboxykinase (ATP) (538 aa).

Residues Arg64, Tyr205, and Lys211 each coordinate substrate. Residues Lys211, His230, and 246–254 (GLSGTGKTT) contribute to the ATP site. The Mn(2+) site is built by Lys211 and His230. A Mn(2+)-binding site is contributed by Asp267. Residues Glu295, Arg331, 447–448 (RI), and Thr453 contribute to the ATP site. Substrate is bound at residue Arg331.

It belongs to the phosphoenolpyruvate carboxykinase (ATP) family. As to quaternary structure, monomer. Mn(2+) is required as a cofactor.

The protein localises to the cytoplasm. It catalyses the reaction oxaloacetate + ATP = phosphoenolpyruvate + ADP + CO2. It participates in carbohydrate biosynthesis; gluconeogenesis. Its function is as follows. Involved in the gluconeogenesis. Catalyzes the conversion of oxaloacetate (OAA) to phosphoenolpyruvate (PEP) through direct phosphoryl transfer between the nucleoside triphosphate and OAA. This chain is Phosphoenolpyruvate carboxykinase (ATP), found in Haemophilus influenzae (strain PittGG).